The sequence spans 250 residues: Octanoyltransferase (250 aa).

Residues 49–230 (DEINDVILVL…ALDDAFAGRL (182 aa)) enclose the BPL/LPL catalytic domain. Substrate is bound by residues 87-94 (RGGRITWH), 160-162 (ALG), and 173-175 (GLA). Cys-191 acts as the Acyl-thioester intermediate in catalysis.

This sequence belongs to the LipB family.

The protein localises to the cytoplasm. The catalysed reaction is octanoyl-[ACP] + L-lysyl-[protein] = N(6)-octanoyl-L-lysyl-[protein] + holo-[ACP] + H(+). It participates in protein modification; protein lipoylation via endogenous pathway; protein N(6)-(lipoyl)lysine from octanoyl-[acyl-carrier-protein]: step 1/2. Its function is as follows. Catalyzes the transfer of endogenously produced octanoic acid from octanoyl-acyl-carrier-protein onto the lipoyl domains of lipoate-dependent enzymes. Lipoyl-ACP can also act as a substrate although octanoyl-ACP is likely to be the physiological substrate. The sequence is that of Octanoyltransferase from Corynebacterium diphtheriae (strain ATCC 700971 / NCTC 13129 / Biotype gravis).